The chain runs to 412 residues: Transforming growth factor beta-2 proprotein (412 aa).

An N-terminal signal peptide occupies residues 1–20 (MHCYLLSVFLTLDLAAVALS). 3 N-linked (GlcNAc...) asparagine glycosylation sites follow: Asn72, Asn139, and Asn240. 4 disulfide bridges follow: Cys307–Cys316, Cys315–Cys378, Cys344–Cys409, and Cys348–Cys411.

It belongs to the TGF-beta family. As to quaternary structure, interacts with Transforming growth factor beta-2 (TGF-beta-2) chain; interaction is non-covalent and maintains (TGF-beta-2) in a latent state. Homodimer; disulfide-linked. Interacts with TGF-beta receptors (TGFBR1 and TGFBR2), leading to signal transduction. The precursor proprotein is cleaved in the Golgi apparatus to form Transforming growth factor beta-2 (TGF-beta-2) and Latency-associated peptide (LAP) chains, which remain non-covalently linked, rendering TGF-beta-2 inactive.

It is found in the secreted. Its subcellular location is the extracellular space. The protein localises to the extracellular matrix. Its function is as follows. Precursor of the Latency-associated peptide (LAP) and Transforming growth factor beta-2 (TGF-beta-2) chains, which constitute the regulatory and active subunit of TGF-beta-2, respectively. Functionally, required to maintain the Transforming growth factor beta-2 (TGF-beta-2) chain in a latent state during storage in extracellular matrix. Associates non-covalently with TGF-beta-2 and regulates its activation via interaction with 'milieu molecules', such as LTBP1 and LRRC32/GARP, that control activation of TGF-beta-2. In terms of biological role, multifunctional protein that regulates various processes such as angiogenesis and heart development. Activation into mature form follows different steps: following cleavage of the proprotein in the Golgi apparatus, Latency-associated peptide (LAP) and Transforming growth factor beta-2 (TGF-beta-2) chains remain non-covalently linked rendering TGF-beta-2 inactive during storage in extracellular matrix. At the same time, LAP chain interacts with 'milieu molecules', such as LTBP1 and LRRC32/GARP, that control activation of TGF-beta-2 and maintain it in a latent state during storage in extracellular milieus. Once activated following release of LAP, TGF-beta-2 acts by binding to TGF-beta receptors (TGFBR1 and TGFBR2), which transduce signal. The chain is Transforming growth factor beta-2 proprotein (TGFB2) from Gallus gallus (Chicken).